Consider the following 219-residue polypeptide: Uracil-DNA glycosylase (219 aa).

Asp-59 functions as the Proton acceptor in the catalytic mechanism.

This sequence belongs to the uracil-DNA glycosylase (UDG) superfamily. UNG family.

It localises to the cytoplasm. It catalyses the reaction Hydrolyzes single-stranded DNA or mismatched double-stranded DNA and polynucleotides, releasing free uracil.. Functionally, excises uracil residues from the DNA which can arise as a result of misincorporation of dUMP residues by DNA polymerase or due to deamination of cytosine. This chain is Uracil-DNA glycosylase, found in Macrococcus caseolyticus (strain JCSC5402) (Macrococcoides caseolyticum).